We begin with the raw amino-acid sequence, 2925 residues long: TPR and ankyrin repeat-containing protein 1 (2925 aa).

2 TPR repeats span residues 15–48 and 50–82; these read AVLL…DPTY and KGYY…VQRS. ANK repeat units lie at residues 168–198, 203–232, 240–276, 463–492, 497–518, and 546–575; these read EKYV…SVET, PLHA…EWKG, DGCT…DPTL, SQER…DPRA, EGDT…DIGF, and NGNT…KFDI. Disordered stretches follow at residues 612 to 669, 706 to 741, and 1077 to 1103; these read SRQD…LPGT, PEDC…DCSE, and VEPG…SIEV. Polar residues predominate over residues 624-641; it reads SKSTAPGHTSQLKSQGSF. Basic and acidic residues predominate over residues 720–730; sequence AGKEGKKDDKP. Over residues 1085–1103 the composition is skewed to acidic residues; sequence GGEEEEEEEDEEEEDSIEV. TPR repeat units lie at residues 1699 to 1732 and 1793 to 1826; these read PAEW…EKEK and LGKI…DLAL. Residues 2301–2330 are a coiled coil; that stretch reads EEFEKLLHQEEDNYNRELKALESEKDERGR.

This chain is TPR and ankyrin repeat-containing protein 1 (TRANK1), found in Homo sapiens (Human).